The sequence spans 344 residues: 4-dimethylallyltryptophan N-methyltransferase easF (344 aa).

This sequence belongs to the methyltransferase superfamily. In terms of assembly, homodimer.

It catalyses the reaction 4-(3-methylbut-2-enyl)-L-tryptophan + S-adenosyl-L-methionine = 4-(3-methylbut-2-enyl)-L-abrine + S-adenosyl-L-homocysteine + H(+). The protein operates within alkaloid biosynthesis; ergot alkaloid biosynthesis. Its function is as follows. 4-dimethylallyltryptophan N-methyltransferase; part of the gene cluster that mediates the biosynthesis of fungal ergot alkaloid. DmaW catalyzes the first step of ergot alkaloid biosynthesis by condensing dimethylallyl diphosphate (DMAP) and tryptophan to form 4-dimethylallyl-L-tryptophan. The second step is catalyzed by the methyltransferase easF that methylates 4-dimethylallyl-L-tryptophan in the presence of S-adenosyl-L-methionine, resulting in the formation of 4-dimethylallyl-L-abrine. The catalase easC and the FAD-dependent oxidoreductase easE then transform 4-dimethylallyl-L-abrine to chanoclavine-I which is further oxidized by easD in the presence of NAD(+), resulting in the formation of chanoclavine-I aldehyde. Agroclavine dehydrogenase easG then mediates the conversion of chanoclavine-I aldehyde to agroclavine via a non-enzymatic adduct reaction: the substrate is an iminium intermediate that is formed spontaneously from chanoclavine-I aldehyde in the presence of glutathione. The presence of easA is not required to complete this reaction. Further conversion of agroclavine to paspalic acid is a two-step process involving oxidation of agroclavine to elymoclavine and of elymoclavine to paspalic acid, the second step being performed by the elymoclavine oxidase cloA. Paspalic acid is then further converted to D-lysergic acid. Ergopeptines are assembled from D-lysergic acid and three different amino acids by the D-lysergyl-peptide-synthetases composed each of a monomudular and a trimodular nonribosomal peptide synthetase subunit. LpsB and lpsC encode the monomodular subunits responsible for D-lysergic acid activation and incorporation into the ergopeptine backbone. LpsA1 and A2 subunits encode the trimodular nonribosomal peptide synthetase assembling the tripeptide portion of ergopeptines. LpsA1 is responsible for formation of the major ergopeptine, ergotamine, and lpsA2 for alpha-ergocryptine, the minor ergopeptine of the total alkaloid mixture elaborated by C.purpurea. D-lysergyl-tripeptides are assembled by the nonribosomal peptide synthetases and released as N-(D-lysergyl-aminoacyl)-lactams. Cyclolization of the D-lysergyl-tripeptides is performed by the Fe(2+)/2-ketoglutarate-dependent dioxygenase easH which introduces a hydroxyl group into N-(D-lysergyl-aminoacyl)-lactam at alpha-C of the aminoacyl residue followed by spontaneous condensation with the terminal lactam carbonyl group. The polypeptide is 4-dimethylallyltryptophan N-methyltransferase easF (Claviceps purpurea (Ergot fungus)).